A 285-amino-acid polypeptide reads, in one-letter code: MTQNHDPYSDAQALVGLTLGKATDYQAEYDASLLQGVPRSLNRNAIALTGTLPFHGADIWTGYELSWLNAKGKPMVAIAEFHLSYESLNLIESKSFKLYLNSFNQTKFDSIDSLQKTLVADLSQCAQGDISVKIIEPKSFGIQRIIELPGTCIDDLDIEVSDYSFNPDYLENSTDDKQTVAETLNSNLLKSNCLITSQPDWGSVMIRYQGPKIDREKLLRYLISFRQHNEFHEQCVERIFVDLKRFCHCTKLTVYARYTRRGGLDINPYRSDFEQPGESHRLARQ.

Substrate is bound at residue 91–93 (IES). An NADPH-binding site is contributed by 93–94 (SK). The active-site Thioimide intermediate is the Cys193. The Proton donor role is filled by Asp200. Substrate is bound at residue 232–233 (HE). 261–262 (RG) lines the NADPH pocket.

Belongs to the GTP cyclohydrolase I family. QueF type 2 subfamily. Homodimer.

The protein localises to the cytoplasm. The enzyme catalyses 7-aminomethyl-7-carbaguanine + 2 NADP(+) = 7-cyano-7-deazaguanine + 2 NADPH + 3 H(+). Its pathway is tRNA modification; tRNA-queuosine biosynthesis. Its function is as follows. Catalyzes the NADPH-dependent reduction of 7-cyano-7-deazaguanine (preQ0) to 7-aminomethyl-7-deazaguanine (preQ1). In Shewanella baltica (strain OS223), this protein is NADPH-dependent 7-cyano-7-deazaguanine reductase.